We begin with the raw amino-acid sequence, 148 residues long: Methylglyoxal synthase (148 aa).

Residues valine 4–aspartate 148 enclose the MGS-like domain. Substrate contacts are provided by residues histidine 17, lysine 21, threonine 43 to threonine 46, and serine 63 to glycine 64. The active-site Proton donor/acceptor is aspartate 69. A substrate-binding site is contributed by histidine 96.

This sequence belongs to the methylglyoxal synthase family.

The enzyme catalyses dihydroxyacetone phosphate = methylglyoxal + phosphate. In terms of biological role, catalyzes the formation of methylglyoxal from dihydroxyacetone phosphate. This chain is Methylglyoxal synthase, found in Leptospira interrogans serogroup Icterohaemorrhagiae serovar copenhageni (strain Fiocruz L1-130).